Here is a 172-residue protein sequence, read N- to C-terminus: Lipoprotein signal peptidase (172 aa).

Helical transmembrane passes span 10–30, 68–88, and 98–118; these read LIWL…KAWV, WQLW…AFWL, and SALP…DRLM. Residues aspartate 124 and aspartate 142 contribute to the active site. A helical transmembrane segment spans residues 138-158; that stretch reads FNIADSAIVGGAIGIAVFGLF.

This sequence belongs to the peptidase A8 family.

Its subcellular location is the cell inner membrane. It carries out the reaction Release of signal peptides from bacterial membrane prolipoproteins. Hydrolyzes -Xaa-Yaa-Zaa-|-(S,diacylglyceryl)Cys-, in which Xaa is hydrophobic (preferably Leu), and Yaa (Ala or Ser) and Zaa (Gly or Ala) have small, neutral side chains.. It participates in protein modification; lipoprotein biosynthesis (signal peptide cleavage). This protein specifically catalyzes the removal of signal peptides from prolipoproteins. This chain is Lipoprotein signal peptidase, found in Xanthomonas axonopodis pv. citri (strain 306).